The chain runs to 1347 residues: DExH-box ATP-dependent RNA helicase DExH11 (1347 aa).

The interval 263–291 (ELEGDDHTAGSESPKAEAEPDAKASISNE) is disordered. Residues 267-284 (DDHTAGSESPKAEAEPDA) are compositionally biased toward basic and acidic residues. The 156-residue stretch at 369-524 (ICCLEKGESV…WIGRTKQKEI (156 aa)) folds into the Helicase ATP-binding domain. ATP is bound at residue 382–389 (AHTSAGKT). A DEVH box motif is present at residues 472-475 (DEVH). The interval 566 to 625 (SQKKKNSNAVSVAPKQQMGSSAHQDGSKSQKHEAHSRGKQNKHSSVKDVGKSSYSGNSQN) is disordered. A compositionally biased stretch (basic and acidic residues) spans 590–601 (DGSKSQKHEAHS). The Helicase C-terminal domain maps to 673–838 (DLTSSSEKSE…LTYIMILHLL (166 aa)).

Belongs to the DExH box helicase family. SKI2 subfamily. As to quaternary structure, component of the cytoplasmic SKI complex, which consists of SKI2, SKI3 and VIP3/SKI8. Expressed in vascular tissues of leaves and roots of young plants.

Its subcellular location is the cytoplasm. The catalysed reaction is ATP + H2O = ADP + phosphate + H(+). Its function is as follows. Component of the SKI complex which is thought to be involved in exosome-mediated RNA decay and associates with transcriptionally active genes in a manner dependent on PAF1 complex (PAF1C). Involved in the regulation of potassium deprivation stress response. The sequence is that of DExH-box ATP-dependent RNA helicase DExH11 from Arabidopsis thaliana (Mouse-ear cress).